Here is a 167-residue protein sequence, read N- to C-terminus: MDLKQIEKLMIAMGRNGMKRFAIKREGLELELERDTREGNRQEPVFYDSRLFSGFSQERPIPTDPKKDTIKETTTENSETSTTTSSGDFISSPLVGTFYGSPAPDSPSFVKPGDIVSEDTIVCIVEAMKVMNEVKAGMSGRVLEVLITNGDPVQFGSKLFRIAKDAS.

Residues 53 to 91 (SGFSQERPIPTDPKKDTIKETTTENSETSTTTSSGDFIS) form a disordered region. Over residues 64–74 (DPKKDTIKETT) the composition is skewed to basic and acidic residues. Low complexity predominate over residues 75 to 86 (TENSETSTTTSS). A Biotinyl-binding domain is found at 87–163 (GDFISSPLVG…QFGSKLFRIA (77 aa)). Lys129 bears the N6-biotinyllysine mark.

Homodimer.

It participates in lipid metabolism; fatty acid biosynthesis. Its function is as follows. This protein is a component of the acetyl coenzyme A carboxylase complex; first, biotin carboxylase catalyzes the carboxylation of the carrier protein and then the transcarboxylase transfers the carboxyl group to form malonyl-CoA. The sequence is that of Biotin carboxyl carrier protein of acetyl-CoA carboxylase (accB) from Chlamydia pneumoniae (Chlamydophila pneumoniae).